The primary structure comprises 189 residues: Putative zinc finger protein ORF189 (189 aa).

A C2H2-type zinc finger spans residues 114–137 (YVCPYCVSRFPTVRALKIHLKRRH).

In Acidianus two-tailed virus (ATV), this protein is Putative zinc finger protein ORF189.